The chain runs to 332 residues: Malate dehydrogenase, cytoplasmic (332 aa).

NAD(+)-binding positions include Gly11–Ala17 and Asp42. Arg92 and Arg98 together coordinate substrate. Residues Asn105, Gln112, and Val129 to Asn131 contribute to the NAD(+) site. Positions 131 and 162 each coordinate substrate. His187 serves as the catalytic Proton acceptor.

The protein belongs to the LDH/MDH superfamily. MDH type 2 family. As to quaternary structure, homodimer.

Its subcellular location is the cytoplasm. The catalysed reaction is (S)-malate + NAD(+) = oxaloacetate + NADH + H(+). Its activity is regulated as follows. By arsenate for both the forward and reverse reactions. Its function is as follows. Malate dehydrogenase. Has no activity with NADPH as substrate. Does not show lactate dehydrogenase activity. The chain is Malate dehydrogenase, cytoplasmic from Taenia solium (Pork tapeworm).